The following is a 281-amino-acid chain: ATP phosphoribosyltransferase (281 aa).

Belongs to the ATP phosphoribosyltransferase family. Long subfamily. The cofactor is Mg(2+).

The protein resides in the cytoplasm. It carries out the reaction 1-(5-phospho-beta-D-ribosyl)-ATP + diphosphate = 5-phospho-alpha-D-ribose 1-diphosphate + ATP. It functions in the pathway amino-acid biosynthesis; L-histidine biosynthesis; L-histidine from 5-phospho-alpha-D-ribose 1-diphosphate: step 1/9. With respect to regulation, feedback inhibited by histidine. Catalyzes the condensation of ATP and 5-phosphoribose 1-diphosphate to form N'-(5'-phosphoribosyl)-ATP (PR-ATP). Has a crucial role in the pathway because the rate of histidine biosynthesis seems to be controlled primarily by regulation of HisG enzymatic activity. The protein is ATP phosphoribosyltransferase (hisG) of Archaeoglobus fulgidus (strain ATCC 49558 / DSM 4304 / JCM 9628 / NBRC 100126 / VC-16).